The following is a 436-amino-acid chain: Hydrogenobyrinate a,c-diamide synthase (436 aa).

Positions 244–435 (RIAVARDDAF…MHVIDFSGEA (192 aa)) constitute a GATase cobBQ-type domain. Cys327 serves as the catalytic Nucleophile.

This sequence belongs to the CobB/CbiA family. Mg(2+) serves as cofactor.

It carries out the reaction hydrogenobyrinate + 2 L-glutamine + 2 ATP + 2 H2O = hydrogenobyrinate a,c-diamide + 2 L-glutamate + 2 ADP + 2 phosphate + 2 H(+). The protein operates within cofactor biosynthesis; adenosylcobalamin biosynthesis; cob(II)yrinate a,c-diamide from precorrin-2 (aerobic route): step 9/10. Functionally, catalyzes the ATP-dependent amidation of the two carboxylate groups at positions a and c of hydrogenobyrinate, using either L-glutamine or ammonia as the nitrogen source. The sequence is that of Hydrogenobyrinate a,c-diamide synthase from Brucella ovis (strain ATCC 25840 / 63/290 / NCTC 10512).